An 88-amino-acid chain; its full sequence is Putative membrane protein insertion efficiency factor (88 aa).

A disordered region spans residues 64–88 (GVDPVPKKSSSKKTSSTTACGCGHS).

The protein belongs to the UPF0161 family.

Its subcellular location is the cell inner membrane. In terms of biological role, could be involved in insertion of integral membrane proteins into the membrane. The polypeptide is Putative membrane protein insertion efficiency factor (Herminiimonas arsenicoxydans).